The following is a 521-amino-acid chain: MDNIQSYKLAHIFDGSYGKLVYGIKKEFLFAHPELRYTIHYEKNDLFKYSSISKPIDRVISHKTLEKEDRVLIVLDAPITSSDIQIICVELWWKTGYIFIYKRNGMFSDPYRPEIKVETVITGVTNSAISTATEEPREFAEPPPPPATTARSSMQAFTELLERLSGNTAAPQDPTLSELTNLELVKKDEPEIKNKEDGILYGVELSTAIYRKPSDQSIILSPFWCNHKHWVYYSKQFTISAPTLPASKITEMDLEDICKRNFFLNQNKVMLMSLPEKKLSFQPKPQMRPLFIEEMMTQEHLNHLVYECSKTATWALNTLIPEYDIVERLDKVDKGVYNVLFYEKKVKPGRKYDMNTYPLMFYTKYGLRFDHINSSKKFKHIAFCVKREIVGVEVTYYDELMNKEWTELLYGEILPKVPIIQDFLENMERLHRQVVDGNITISAEMSLDIDNRIRRMLDDAVNDIPFHIYFTEDLERYIYHPFFPLPVMSPFAERFIDTDTDAETKRILRFVSEIRSKAENV.

This is an uncharacterized protein from Magallana gigas (Pacific oyster).